The following is a 501-amino-acid chain: Aspartate--tRNA ligase, cytoplasmic (501 aa).

At Thr-52 the chain carries Phosphothreonine. At Lys-74 the chain carries N6-acetyllysine. Glu-229 provides a ligand contact to L-aspartate. Ser-249 is subject to Phosphoserine. Residues 251-254 (QLYK) are aspartate. L-aspartate is bound at residue Arg-273. ATP is bound by residues 273-275 (RAE) and 281-283 (RHL). Lys-374 is modified (N6-acetyllysine). Glu-424 contacts ATP. The L-aspartate site is built by Ser-427 and Arg-431. 472-475 (GLER) provides a ligand contact to ATP.

It belongs to the class-II aminoacyl-tRNA synthetase family. Type 2 subfamily. In terms of assembly, homodimer. Part of a multisubunit complex that groups tRNA ligases for Arg (RARS1), Asp (DARS1), Gln (QARS1), Ile (IARS1), Leu (LARS1), Lys (KARS1), Met (MARS1) the bifunctional ligase for Glu and Pro (EPRS1) and the auxiliary subunits AIMP1/p43, AIMP2/p38 and EEF1E1/p18.

It localises to the cytoplasm. It catalyses the reaction tRNA(Asp) + L-aspartate + ATP = L-aspartyl-tRNA(Asp) + AMP + diphosphate. In terms of biological role, catalyzes the specific attachment of an amino acid to its cognate tRNA in a 2 step reaction: the amino acid (AA) is first activated by ATP to form AA-AMP and then transferred to the acceptor end of the tRNA. The sequence is that of Aspartate--tRNA ligase, cytoplasmic (Dars1) from Mus musculus (Mouse).